A 113-amino-acid chain; its full sequence is Cell cycle protein GpsB (113 aa).

Residues 36–68 (LDMVIKDYSTFTQEIEALQAENIRLVQELDNAP) adopt a coiled-coil conformation.

It belongs to the GpsB family. As to quaternary structure, forms polymers through the coiled coil domains. Interacts with PBP1, MreC and EzrA.

The protein resides in the cytoplasm. Its function is as follows. Divisome component that associates with the complex late in its assembly, after the Z-ring is formed, and is dependent on DivIC and PBP2B for its recruitment to the divisome. Together with EzrA, is a key component of the system that regulates PBP1 localization during cell cycle progression. Its main role could be the removal of PBP1 from the cell pole after pole maturation is completed. Also contributes to the recruitment of PBP1 to the division complex. Not essential for septum formation. The protein is Cell cycle protein GpsB of Listeria innocua serovar 6a (strain ATCC BAA-680 / CLIP 11262).